The following is a 159-amino-acid chain: 2-C-methyl-D-erythritol 2,4-cyclodiphosphate synthase (159 aa).

A divalent metal cation-binding residues include aspartate 8 and histidine 10. 4-CDP-2-C-methyl-D-erythritol 2-phosphate is bound by residues aspartate 8–histidine 10 and histidine 34–serine 35. Histidine 42 is a binding site for a divalent metal cation. 4-CDP-2-C-methyl-D-erythritol 2-phosphate is bound by residues aspartate 56 to glycine 58, phenylalanine 61 to aspartate 65, alanine 100 to alanine 106, threonine 132 to glutamate 135, phenylalanine 139, and arginine 142.

The protein belongs to the IspF family. Homotrimer. It depends on a divalent metal cation as a cofactor.

The enzyme catalyses 4-CDP-2-C-methyl-D-erythritol 2-phosphate = 2-C-methyl-D-erythritol 2,4-cyclic diphosphate + CMP. Its pathway is isoprenoid biosynthesis; isopentenyl diphosphate biosynthesis via DXP pathway; isopentenyl diphosphate from 1-deoxy-D-xylulose 5-phosphate: step 4/6. In terms of biological role, involved in the biosynthesis of isopentenyl diphosphate (IPP) and dimethylallyl diphosphate (DMAPP), two major building blocks of isoprenoid compounds. Catalyzes the conversion of 4-diphosphocytidyl-2-C-methyl-D-erythritol 2-phosphate (CDP-ME2P) to 2-C-methyl-D-erythritol 2,4-cyclodiphosphate (ME-CPP) with a corresponding release of cytidine 5-monophosphate (CMP). The protein is 2-C-methyl-D-erythritol 2,4-cyclodiphosphate synthase of Alkaliphilus metalliredigens (strain QYMF).